The sequence spans 610 residues: Elongation factor 4 (610 aa).

The tr-type G domain occupies 11–193 (QRIRNFSIVA…KIVQDIPAPT (183 aa)). Residues 23 to 28 (DHGKST) and 140 to 143 (NKVD) contribute to the GTP site.

Belongs to the TRAFAC class translation factor GTPase superfamily. Classic translation factor GTPase family. LepA subfamily.

It localises to the cell membrane. The enzyme catalyses GTP + H2O = GDP + phosphate + H(+). Functionally, required for accurate and efficient protein synthesis under certain stress conditions. May act as a fidelity factor of the translation reaction, by catalyzing a one-codon backward translocation of tRNAs on improperly translocated ribosomes. Back-translocation proceeds from a post-translocation (POST) complex to a pre-translocation (PRE) complex, thus giving elongation factor G a second chance to translocate the tRNAs correctly. Binds to ribosomes in a GTP-dependent manner. In Limosilactobacillus fermentum (strain NBRC 3956 / LMG 18251) (Lactobacillus fermentum), this protein is Elongation factor 4.